Reading from the N-terminus, the 312-residue chain is Methionyl-tRNA formyltransferase (312 aa).

113–116 lines the (6S)-5,6,7,8-tetrahydrofolate pocket; the sequence is SILP.

This sequence belongs to the Fmt family.

The catalysed reaction is L-methionyl-tRNA(fMet) + (6R)-10-formyltetrahydrofolate = N-formyl-L-methionyl-tRNA(fMet) + (6S)-5,6,7,8-tetrahydrofolate + H(+). Its function is as follows. Attaches a formyl group to the free amino group of methionyl-tRNA(fMet). The formyl group appears to play a dual role in the initiator identity of N-formylmethionyl-tRNA by promoting its recognition by IF2 and preventing the misappropriation of this tRNA by the elongation apparatus. In Hydrogenovibrio crunogenus (strain DSM 25203 / XCL-2) (Thiomicrospira crunogena), this protein is Methionyl-tRNA formyltransferase.